The chain runs to 172 residues: MSKKINGFEVLGEVAWLWASSPLHRKWPLSLLAINVLPAIESNQYVLLKRDGFPIAFCSWANLNLENEIKYLDDVASLVADDWTSGDRRWFIDWIAPFGDSAALYKHMRDNFPNELFRAIRVDPDSRVGKISEFHGGKIDKKLASKIFQQYHFELMSELKNKQNFKFSLVNS.

Residues histidine 24 and aspartate 93 contribute to the active site.

It belongs to the RTX toxin acyltransferase family. As to quaternary structure, homodimer.

Its subcellular location is the cytoplasm. It carries out the reaction a fatty acyl-[ACP] + L-lysyl-[protein] = N(6)-(fatty acyl)-L-lysyl-[protein] + holo-[ACP] + H(+). Its function is as follows. Protein-lysine acyltransferase that catalyzes fatty acylation of the protoxin, thereby converting it to the active toxin. In Actinobacillus pleuropneumoniae (Haemophilus pleuropneumoniae), this protein is RTX-I toxin-activating lysine-acyltransferase ApxIC.